Consider the following 231-residue polypeptide: uncharacterized protein (231 aa).

The N-terminal stretch at 1 to 17 (MFGKILTTSLLIAMTFA) is a signal peptide. The interval 197–231 (KARKQQKNEGDDEETEDEQKIGSAIDGWVERQAKL) is disordered.

This is an uncharacterized protein from Caenorhabditis elegans.